The primary structure comprises 126 residues: Prefoldin subunit beta (126 aa).

It belongs to the prefoldin subunit beta family. Heterohexamer of two alpha and four beta subunits.

The protein resides in the cytoplasm. Functionally, molecular chaperone capable of stabilizing a range of proteins. Seems to fulfill an ATP-independent, HSP70-like function in archaeal de novo protein folding. This Methanocella arvoryzae (strain DSM 22066 / NBRC 105507 / MRE50) protein is Prefoldin subunit beta.